Consider the following 524-residue polypeptide: Na(+)/H(+) antiporter NhaB (524 aa).

Helical transmembrane passes span 13–33 (FLGN…IINP), 98–118 (LLLV…LFVF), 140–160 (AFLS…SVSV), 239–259 (FFIR…LVCL), 304–324 (AIIG…VGLV), 325–345 (GLSV…HSLG), 358–378 (LTVF…TPII), 448–468 (ATPN…APLI), and 479–499 (ALPY…FLLV).

This sequence belongs to the NhaB Na(+)/H(+) (TC 2.A.34) antiporter family.

The protein localises to the cell inner membrane. It carries out the reaction 2 Na(+)(in) + 3 H(+)(out) = 2 Na(+)(out) + 3 H(+)(in). In terms of biological role, na(+)/H(+) antiporter that extrudes sodium in exchange for external protons. The protein is Na(+)/H(+) antiporter NhaB of Yersinia pseudotuberculosis serotype I (strain IP32953).